We begin with the raw amino-acid sequence, 354 residues long: tRNA N6-adenosine threonylcarbamoyltransferase (354 aa).

Fe cation-binding residues include H115 and H119. Substrate contacts are provided by residues 138 to 142 (LVSGG), D171, G184, and N276. Residue D304 participates in Fe cation binding.

It belongs to the KAE1 / TsaD family. The cofactor is Fe(2+).

The protein resides in the cytoplasm. It carries out the reaction L-threonylcarbamoyladenylate + adenosine(37) in tRNA = N(6)-L-threonylcarbamoyladenosine(37) in tRNA + AMP + H(+). Functionally, required for the formation of a threonylcarbamoyl group on adenosine at position 37 (t(6)A37) in tRNAs that read codons beginning with adenine. Is involved in the transfer of the threonylcarbamoyl moiety of threonylcarbamoyl-AMP (TC-AMP) to the N6 group of A37, together with TsaE and TsaB. TsaD likely plays a direct catalytic role in this reaction. In Xanthomonas campestris pv. campestris (strain 8004), this protein is tRNA N6-adenosine threonylcarbamoyltransferase.